The chain runs to 216 residues: Uracil phosphoribosyltransferase (216 aa).

5-phospho-alpha-D-ribose 1-diphosphate-binding positions include arginine 85, arginine 110, and 135–143 (DPMVATGYS). Residues isoleucine 200 and 205–207 (GDA) each bind uracil. Aspartate 206 contacts 5-phospho-alpha-D-ribose 1-diphosphate.

This sequence belongs to the UPRTase family. Requires Mg(2+) as cofactor.

It carries out the reaction UMP + diphosphate = 5-phospho-alpha-D-ribose 1-diphosphate + uracil. The protein operates within pyrimidine metabolism; UMP biosynthesis via salvage pathway; UMP from uracil: step 1/1. With respect to regulation, allosterically activated by GTP. In terms of biological role, catalyzes the conversion of uracil and 5-phospho-alpha-D-ribose 1-diphosphate (PRPP) to UMP and diphosphate. The chain is Uracil phosphoribosyltransferase from Burkholderia mallei (strain NCTC 10247).